Here is a 962-residue protein sequence, read N- to C-terminus: Protein kinase ORF73 (962 aa).

2 disordered regions span residues 1 to 28 (MADRTPKRSADGLIHDAKPSKVTKNDRP) and 62 to 152 (STPA…RATT). Acidic residues predominate over residues 81-90 (DSDDDDEEDN). Residues 143-152 (YDTTGRRATT) show a composition bias toward polar residues. The region spanning 301–595 (LRAAPVLGKG…ASDLLKSPRY (295 aa)) is the Protein kinase domain. Residues 307-315 (LGKGYFGTV) and lysine 324 each bind ATP. Catalysis depends on aspartate 434, which acts as the Proton acceptor.

It belongs to the protein kinase superfamily. Ser/Thr protein kinase family.

It carries out the reaction L-seryl-[protein] + ATP = O-phospho-L-seryl-[protein] + ADP + H(+). It catalyses the reaction L-threonyl-[protein] + ATP = O-phospho-L-threonyl-[protein] + ADP + H(+). This is Protein kinase ORF73 (ORF73) from Ictaluridae (bullhead catfishes).